A 157-amino-acid polypeptide reads, in one-letter code: Ribosome maturation factor RimM (157 aa).

A PRC barrel domain is found at 89 to 156; sequence PGEYYHVDLI…DRLLIDPEFV (68 aa).

This sequence belongs to the RimM family. In terms of assembly, binds ribosomal protein uS19.

It is found in the cytoplasm. In terms of biological role, an accessory protein needed during the final step in the assembly of 30S ribosomal subunit, possibly for assembly of the head region. Essential for efficient processing of 16S rRNA. May be needed both before and after RbfA during the maturation of 16S rRNA. It has affinity for free ribosomal 30S subunits but not for 70S ribosomes. The sequence is that of Ribosome maturation factor RimM from Rhizorhabdus wittichii (strain DSM 6014 / CCUG 31198 / JCM 15750 / NBRC 105917 / EY 4224 / RW1) (Sphingomonas wittichii).